We begin with the raw amino-acid sequence, 500 residues long: Aspartyl/glutamyl-tRNA(Asn/Gln) amidotransferase subunit B (500 aa).

The protein belongs to the GatB/GatE family. GatB subfamily. Heterotrimer of A, B and C subunits.

The catalysed reaction is L-glutamyl-tRNA(Gln) + L-glutamine + ATP + H2O = L-glutaminyl-tRNA(Gln) + L-glutamate + ADP + phosphate + H(+). It catalyses the reaction L-aspartyl-tRNA(Asn) + L-glutamine + ATP + H2O = L-asparaginyl-tRNA(Asn) + L-glutamate + ADP + phosphate + 2 H(+). Allows the formation of correctly charged Asn-tRNA(Asn) or Gln-tRNA(Gln) through the transamidation of misacylated Asp-tRNA(Asn) or Glu-tRNA(Gln) in organisms which lack either or both of asparaginyl-tRNA or glutaminyl-tRNA synthetases. The reaction takes place in the presence of glutamine and ATP through an activated phospho-Asp-tRNA(Asn) or phospho-Glu-tRNA(Gln). This chain is Aspartyl/glutamyl-tRNA(Asn/Gln) amidotransferase subunit B, found in Rhizobium etli (strain CIAT 652).